A 104-amino-acid polypeptide reads, in one-letter code: Large ribosomal subunit protein uL23 (104 aa).

It belongs to the universal ribosomal protein uL23 family. As to quaternary structure, part of the 50S ribosomal subunit. Contacts protein L29, and trigger factor when it is bound to the ribosome.

One of the early assembly proteins it binds 23S rRNA. One of the proteins that surrounds the polypeptide exit tunnel on the outside of the ribosome. Forms the main docking site for trigger factor binding to the ribosome. This chain is Large ribosomal subunit protein uL23, found in Trichormus variabilis (strain ATCC 29413 / PCC 7937) (Anabaena variabilis).